Reading from the N-terminus, the 176-residue chain is Translation initiation factor IF-3 (176 aa).

Belongs to the IF-3 family. Monomer.

Its subcellular location is the cytoplasm. In terms of biological role, IF-3 binds to the 30S ribosomal subunit and shifts the equilibrium between 70S ribosomes and their 50S and 30S subunits in favor of the free subunits, thus enhancing the availability of 30S subunits on which protein synthesis initiation begins. The sequence is that of Translation initiation factor IF-3 from Streptococcus equi subsp. zooepidemicus (strain H70).